A 457-amino-acid chain; its full sequence is Siroheme synthase (457 aa).

Residues 4 to 202 (LPIFCQLRDR…ANADEKAVNA (199 aa)) form a precorrin-2 dehydrogenase /sirohydrochlorin ferrochelatase region. NAD(+) is bound by residues 22–23 (DV) and 43–44 (LT). Serine 128 is subject to Phosphoserine. Positions 216–448 (GEVVLVGAGP…IIVGRVVALR (233 aa)) are uroporphyrinogen-III C-methyltransferase. Proline 225 is an S-adenosyl-L-methionine binding site. Aspartate 248 acts as the Proton acceptor in catalysis. Lysine 270 functions as the Proton donor in the catalytic mechanism. S-adenosyl-L-methionine contacts are provided by residues 301-303 (GGD), isoleucine 306, 331-332 (TA), methionine 382, glycine 411, and alanine 437.

The protein in the N-terminal section; belongs to the precorrin-2 dehydrogenase / sirohydrochlorin ferrochelatase family. In the C-terminal section; belongs to the precorrin methyltransferase family. As to quaternary structure, homodimer.

The enzyme catalyses uroporphyrinogen III + 2 S-adenosyl-L-methionine = precorrin-2 + 2 S-adenosyl-L-homocysteine + H(+). It catalyses the reaction precorrin-2 + NAD(+) = sirohydrochlorin + NADH + 2 H(+). The catalysed reaction is siroheme + 2 H(+) = sirohydrochlorin + Fe(2+). The protein operates within cofactor biosynthesis; adenosylcobalamin biosynthesis; precorrin-2 from uroporphyrinogen III: step 1/1. It participates in cofactor biosynthesis; adenosylcobalamin biosynthesis; sirohydrochlorin from precorrin-2: step 1/1. Its pathway is porphyrin-containing compound metabolism; siroheme biosynthesis; precorrin-2 from uroporphyrinogen III: step 1/1. It functions in the pathway porphyrin-containing compound metabolism; siroheme biosynthesis; siroheme from sirohydrochlorin: step 1/1. The protein operates within porphyrin-containing compound metabolism; siroheme biosynthesis; sirohydrochlorin from precorrin-2: step 1/1. In terms of biological role, multifunctional enzyme that catalyzes the SAM-dependent methylations of uroporphyrinogen III at position C-2 and C-7 to form precorrin-2 via precorrin-1. Then it catalyzes the NAD-dependent ring dehydrogenation of precorrin-2 to yield sirohydrochlorin. Finally, it catalyzes the ferrochelation of sirohydrochlorin to yield siroheme. The chain is Siroheme synthase from Salmonella typhimurium (strain LT2 / SGSC1412 / ATCC 700720).